The chain runs to 345 residues: Nicotinate-nucleotide--dimethylbenzimidazole phosphoribosyltransferase (345 aa).

The active-site Proton acceptor is the glutamate 312.

The protein belongs to the CobT family.

The catalysed reaction is 5,6-dimethylbenzimidazole + nicotinate beta-D-ribonucleotide = alpha-ribazole 5'-phosphate + nicotinate + H(+). The protein operates within nucleoside biosynthesis; alpha-ribazole biosynthesis; alpha-ribazole from 5,6-dimethylbenzimidazole: step 1/2. Its function is as follows. Catalyzes the synthesis of alpha-ribazole-5'-phosphate from nicotinate mononucleotide (NAMN) and 5,6-dimethylbenzimidazole (DMB). The protein is Nicotinate-nucleotide--dimethylbenzimidazole phosphoribosyltransferase of Bacteroides fragilis (strain ATCC 25285 / DSM 2151 / CCUG 4856 / JCM 11019 / LMG 10263 / NCTC 9343 / Onslow / VPI 2553 / EN-2).